The following is a 648-amino-acid chain: Threonine--tRNA ligase (648 aa).

The TGS domain occupies 1–61; the sequence is MIDIILPDGS…INTATVKAIT (61 aa). Residues 243 to 549 form a catalytic region; the sequence is DHRKLGRELE…LIEHYSGKLP (307 aa). The Zn(2+) site is built by cysteine 349, histidine 400, and histidine 526.

It belongs to the class-II aminoacyl-tRNA synthetase family. As to quaternary structure, homodimer. Zn(2+) is required as a cofactor.

It localises to the cytoplasm. It catalyses the reaction tRNA(Thr) + L-threonine + ATP = L-threonyl-tRNA(Thr) + AMP + diphosphate + H(+). In terms of biological role, catalyzes the attachment of threonine to tRNA(Thr) in a two-step reaction: L-threonine is first activated by ATP to form Thr-AMP and then transferred to the acceptor end of tRNA(Thr). Also edits incorrectly charged L-seryl-tRNA(Thr). This chain is Threonine--tRNA ligase, found in Orientia tsutsugamushi (strain Ikeda) (Rickettsia tsutsugamushi).